Here is a 911-residue protein sequence, read N- to C-terminus: FIGNL1-interacting regulator of recombination and mitosis (911 aa).

The disordered stretch occupies residues 830-853 (SEKSQPAQTPLTEEPCAKRARQET). Positions 844 to 853 (PCAKRARQET) are enriched in basic and acidic residues.

It is found in the chromosome. Its subcellular location is the centromere. The protein resides in the kinetochore. The protein localises to the nucleus. It localises to the midbody. It is found in the cytoplasm. Its subcellular location is the cytoskeleton. The protein resides in the spindle. Functionally, may play a role in chromosome segregation. The chain is FIGNL1-interacting regulator of recombination and mitosis from Danio rerio (Zebrafish).